Consider the following 569-residue polypeptide: Acyl-CoA-binding domain-containing protein 5 (569 aa).

The signal sequence occupies residues 1 to 31 (MELFYELLLTAAASLLVAFLLARLLASAATA). The ACB domain occupies 415-506 (IEKRFGVAAA…LSEAIPGWMG (92 aa)). The an acyl-CoA site is built by Lys-474 and Tyr-493. An N-linked (GlcNAc...) asparagine glycan is attached at Asn-508. Polar residues-rich tracts occupy residues 533–544 (INQHDSQGNEDN) and 552–569 (LTSS…IPAE). A disordered region spans residues 533–569 (INQHDSQGNEDNTGMYEGHLTSSPNPEKGQSSDIPAE).

It belongs to the ACBP family. In terms of tissue distribution, highly expressed in seeds and leaves. Expressed at low levels in roots.

It is found in the endoplasmic reticulum. Its function is as follows. Binds medium- and long-chain acyl-CoA esters with high affinity. Can interact in vitro with palmitoyl-CoA and linolenoyl-CoA. Binds phosphatidic acid (PA) and phosphatidylcholine (PC) in vitro. May play a role in the biosynthesis of phospholipids. This Oryza sativa subsp. japonica (Rice) protein is Acyl-CoA-binding domain-containing protein 5.